The primary structure comprises 1117 residues: Protein ECM21 (1117 aa).

Disordered regions lie at residues 1 to 48 and 63 to 155; these read MPFI…RRSS and VHSP…YSQI. A compositionally biased stretch (polar residues) spans 11-34; it reads KNSSHSLSETDLNQSKGQPFQPSP. The residue at position 18 (Ser18) is a Phosphoserine. The segment covering 70 to 81 has biased composition (low complexity); sequence NNTTKGGNNNGN. Ser115 carries the phosphoserine modification. Over residues 117-130 the composition is skewed to low complexity; the sequence is SDSATTTPRSSTSD. A Phosphoserine modification is found at Ser140. Lys191 is covalently cross-linked (Glycyl lysine isopeptide (Lys-Gly) (interchain with G-Cter in ubiquitin)). Disordered stretches follow at residues 275 to 312 and 486 to 523; these read ATTA…ELNT and YRQD…AQAH. Position 286 is a phosphoserine (Ser286). Over residues 501-519 the composition is skewed to low complexity; that stretch reads SSSSLSSTTSSLKLTETES. Phosphoserine occurs at positions 527 and 550. Residues Lys577, Lys651, and Lys712 each participate in a glycyl lysine isopeptide (Lys-Gly) (interchain with G-Cter in ubiquitin) cross-link. Ser775 carries the phosphoserine modification. Glycyl lysine isopeptide (Lys-Gly) (interchain with G-Cter in ubiquitin) cross-links involve residues Lys794, Lys807, and Lys1024. 2 disordered regions span residues 1016-1065 and 1079-1117; these read RSRF…KDKQ and KDDE…SDEE. Over residues 1027-1059 the composition is skewed to polar residues; the sequence is STPSPVNRSHNSSPTNGLSQANGTVRIPNATTE. Ser1035 carries the phosphoserine modification. Low complexity predominate over residues 1089–1098; the sequence is SSSSADSLLS.

The protein belongs to the CSR2 family.

Its subcellular location is the cytoplasm. In terms of biological role, may be involved in cell wall organization and biogenesis. The chain is Protein ECM21 (ECM21) from Saccharomyces cerevisiae (strain ATCC 204508 / S288c) (Baker's yeast).